Here is a 280-residue protein sequence, read N- to C-terminus: Nocamycin O-methyltransferase (280 aa).

The protein belongs to the methyltransferase superfamily.

The enzyme catalyses nocamycin E + S-adenosyl-L-methionine = nocamycin I + S-adenosyl-L-homocysteine. It functions in the pathway antibiotic biosynthesis. Functionally, involved in the biosynthesis of nocamycin I and nocamycin II. Catalyzes the methylation of nocamycin E to yield nocamycin I. The polypeptide is Nocamycin O-methyltransferase (Saccharothrix syringae (Nocardiopsis syringae)).